A 547-amino-acid chain; its full sequence is Cytochrome P450 monooxygenase oblB (547 aa).

Transmembrane regions (helical) follow at residues 42 to 62 (GAVGAIYAIYISGLVIYRLFL) and 242 to 262 (FDMFHLGAVSLPLFMGMPWLI). N-linked (GlcNAc...) asparagine glycosylation occurs at Asn-277. A helical transmembrane segment spans residues 345 to 365 (VLIGSGTMTTAGTMGFLCYYI). Cys-489 lines the heme pocket.

It belongs to the cytochrome P450 family. Requires heme as cofactor.

It is found in the membrane. It catalyses the reaction ophiobolin F + 4 reduced [NADPH--hemoprotein reductase] + 4 O2 = ophiobolin C + 4 oxidized [NADPH--hemoprotein reductase] + 6 H2O + 4 H(+). Its pathway is secondary metabolite biosynthesis; terpenoid biosynthesis. Cytochrome P450 monooxygenase; part of the gene cluster that mediates the biosynthesis of the sesterterpenes ophiobolins, fungal phytotoxins with potential anti-cancer activities. The first step of the pathway is performed by the sesterterpene synthase oblA that possesses both prenyl transferase and terpene cyclase activity, converting isopentenyl diphosphate and dimethylallyl diphosphate into geranylfarnesyl diphosphate (GFPP) and further converting GFPP into ophiobolin F, respectively. Other sesterterpenoids (C(25) terpenoids) are found as minor products of oblA. The cytochrome P450 monooxygenase oblB then catalyzes a four-step oxidative transformation of ophiobolin F to yield ophiobolin C. The function of the cytochrome P450 monooxygenase oblE has still to be determined. In Emericella variicolor (Aspergillus stellatus), this protein is Cytochrome P450 monooxygenase oblB.